The sequence spans 347 residues: L-threonine 3-dehydrogenase (347 aa).

Position 43 (Cys-43) interacts with Zn(2+). Residues Thr-45 and His-48 each act as charge relay system in the active site. Zn(2+) contacts are provided by His-68, Glu-69, Cys-98, Cys-101, Cys-104, and Cys-112. NAD(+)-binding positions include Ile-180, Asp-200, Arg-205, 267 to 269 (LSL), and 292 to 293 (IT).

It belongs to the zinc-containing alcohol dehydrogenase family. Homotetramer. The cofactor is Zn(2+).

The protein resides in the cytoplasm. It carries out the reaction L-threonine + NAD(+) = (2S)-2-amino-3-oxobutanoate + NADH + H(+). It functions in the pathway amino-acid degradation; L-threonine degradation via oxydo-reductase pathway; glycine from L-threonine: step 1/2. Its function is as follows. Catalyzes the NAD(+)-dependent oxidation of L-threonine to 2-amino-3-ketobutyrate. This Bacillus subtilis (strain 168) protein is L-threonine 3-dehydrogenase.